A 226-amino-acid chain; its full sequence is MCLRELDLNGLRIKTPAIVASLGADAERVASRAESEGADIIEVRLDLLADPDVIRDIRSTVSLPLIATNRIASEGGSFRGSEERRISILRDASRFSDIIDIELMAPGRDMLLKNISCPALISYHDFSGVPDNLKSIIEDAMRAGADLVKIAVTPHSMQEALAILRILLDVDCPLCIIGMGAVGRHLRAVAPLYGSLLTYGYVTGPTAPGQMSVRELDTALRCLGAR.

3-dehydroquinate contacts are provided by residues serine 21, 42–44 (EVR), and arginine 70. The active-site Proton donor/acceptor is histidine 124. The active-site Schiff-base intermediate with substrate is lysine 149. 3-dehydroquinate contacts are provided by arginine 187, threonine 206, and glutamine 210.

Belongs to the type-I 3-dehydroquinase family. In terms of assembly, homodimer.

It carries out the reaction 3-dehydroquinate = 3-dehydroshikimate + H2O. Its pathway is metabolic intermediate biosynthesis; chorismate biosynthesis; chorismate from D-erythrose 4-phosphate and phosphoenolpyruvate: step 3/7. In terms of biological role, involved in the third step of the chorismate pathway, which leads to the biosynthesis of aromatic amino acids. Catalyzes the cis-dehydration of 3-dehydroquinate (DHQ) and introduces the first double bond of the aromatic ring to yield 3-dehydroshikimate. The chain is 3-dehydroquinate dehydratase from Methanothrix thermoacetophila (strain DSM 6194 / JCM 14653 / NBRC 101360 / PT) (Methanosaeta thermophila).